A 319-amino-acid chain; its full sequence is Protein sprouty homolog 1 (319 aa).

Residue Met1 is modified to N-acetylmethionine. Positions 54 to 160 are disordered; that stretch reads TEGPSVVKRP…ERAIRTQPKQ (107 aa). A compositionally biased stretch (basic and acidic residues) spans 69–79; sequence PRQEKHERTHE. Low complexity predominate over residues 112-131; the sequence is SRSTSTGSAASSGSNSSASS. In terms of domain architecture, SPR spans 183 to 295; the sequence is QCGKCKCGEC…CYDWIHRPGC (113 aa).

Belongs to the sprouty family. In terms of assembly, forms heterodimers with SPRY2. Interacts with TESK1. Interacts with CAV1 (via C-terminus).

It localises to the cytoplasm. The protein localises to the membrane. Functionally, inhibits fibroblast growth factor (FGF)-induced retinal lens fiber differentiation, probably by inhibiting FGF-mediated phosphorylation of ERK1/2. Inhibits TGFB-induced epithelial-to-mesenchymal transition in lens epithelial cells. In Cervus elaphus (Red deer), this protein is Protein sprouty homolog 1 (SPRY1).